A 378-amino-acid polypeptide reads, in one-letter code: Putative protein YbfL (378 aa).

The protein belongs to the transposase 11 family.

In Escherichia coli (strain K12), this protein is Putative protein YbfL (ybfL).